The chain runs to 419 residues: Pregnancy-specific beta-1-glycoprotein 1 (419 aa).

A signal peptide spans 1–34; the sequence is MGTLSAPPCTQRIKWKGLLLTASLLNFWNLPTTA. The 110-residue stretch at 35-144 folds into the Ig-like V-type domain; that stretch reads QVTIEAEPTK…TGRFTFTLHL (110 aa). Residues N61, N104, N111, N199, N259, N268, and N303 are each glycosylated (N-linked (GlcNAc...) asparagine). Ig-like C2-type domains follow at residues 149 to 234, 240 to 327, and 335 to 410; these read PSIS…VTLN, PKPY…VTLN, and PRIY…KSMT. C169 and C217 are joined by a disulfide. Disulfide bonds link C262-C310 and C354-C394.

The protein belongs to the immunoglobulin superfamily. CEA family.

The protein resides in the secreted. This is Pregnancy-specific beta-1-glycoprotein 1 (PSG1) from Homo sapiens (Human).